A 122-amino-acid chain; its full sequence is Mth938 domain-containing protein (122 aa).

The interval 6 to 122 is MTH138-like domain; the sequence is IASLSWGQMK…RVGGVFHSTC (117 aa).

Belongs to the AAMDC family.

Its subcellular location is the cytoplasm. Functionally, may play a role in preadipocyte differentiation and adipogenesis. This is Mth938 domain-containing protein (AAMDC) from Bos taurus (Bovine).